Consider the following 173-residue polypeptide: Large ribosomal subunit protein uL10 (173 aa).

The protein belongs to the universal ribosomal protein uL10 family. Part of the ribosomal stalk of the 50S ribosomal subunit. The N-terminus interacts with L11 and the large rRNA to form the base of the stalk. The C-terminus forms an elongated spine to which L12 dimers bind in a sequential fashion forming a multimeric L10(L12)X complex.

Its function is as follows. Forms part of the ribosomal stalk, playing a central role in the interaction of the ribosome with GTP-bound translation factors. This chain is Large ribosomal subunit protein uL10, found in Beutenbergia cavernae (strain ATCC BAA-8 / DSM 12333 / CCUG 43141 / JCM 11478 / NBRC 16432 / NCIMB 13614 / HKI 0122).